We begin with the raw amino-acid sequence, 559 residues long: Actin-binding protein WASF1 (559 aa).

3 disordered regions span residues 169–202, 307–400, and 412–492; these read TEDK…DRRR, RPQS…SPPV, and VHPL…STLP. Basic and acidic residues predominate over residues 182 to 202; the sequence is KNLDRPHEPEKVPRAPHDRRR. Pro residues predominate over residues 322–332; sequence PTPPPPPPPLP. Residues 333–346 show a composition bias toward low complexity; sequence SALSTSSLRASMTS. Arg341 carries the post-translational modification Asymmetric dimethylarginine; alternate. Position 341 is an omega-N-methylarginine; alternate (Arg341). Composition is skewed to pro residues over residues 347-374, 384-399, 423-437, and 458-477; these read TPPP…PPAP, PAPP…PSPP, LPPP…PPGI, and TPSP…PPSQ. Ser489 carries the post-translational modification Phosphoserine. The region spanning 497 to 514 is the WH2 domain; the sequence is ARSVLLEAIRKGIQLRKV.

Belongs to the SCAR/WAVE family. Component of the WAVE1 complex composed of ABI2, CYFIP1 or CYFIP2, BRK1, NCKAP1 and WASF1/WAVE1. Within the complex, a heterodimer containing NCKAP1 and CYFIP1 interacts with a heterotrimer formed by WAVE1, ABI2 and BRK1. CYFIP2 binds to activated RAC1 which causes the complex to dissociate, releasing activated WASF1. The complex can also be activated by NCK1. Binds actin and the Arp2/3 complex. Interacts with BAIAP2. Interacts with SHANK3; the interaction mediates the association of SHANK3 with the WAVE1 complex. Interacts with ABI1 (via N-terminus). Interacts with SORBS2; this interaction greatly enhances phosphorylation by ABL1 and dephosphorylation by PTPN12 and might mediate partial to focal adhesion sites. As to expression, expressed in hippocampal neurons (at protein level).

Its subcellular location is the cytoplasm. It is found in the cytoskeleton. It localises to the synapse. The protein localises to the cell junction. The protein resides in the focal adhesion. In terms of biological role, downstream effector molecule involved in the transmission of signals from tyrosine kinase receptors and small GTPases to the actin cytoskeleton. Promotes formation of actin filaments. Part of the WAVE complex that regulates lamellipodia formation. The WAVE complex regulates actin filament reorganization via its interaction with the Arp2/3 complex. As component of the WAVE1 complex, required for BDNF-NTRK2 endocytic trafficking and signaling from early endosomes. Also involved in the regulation of mitochondrial dynamics. This chain is Actin-binding protein WASF1 (Wasf1), found in Rattus norvegicus (Rat).